The chain runs to 476 residues: Membrane-bound lytic murein transglycosylase F (476 aa).

The first 15 residues, 1-15, serve as a signal peptide directing secretion; the sequence is MRSFLLILFCVSLLT. The interval 16-258 is non-LT domain; it reads GCQGERVDAA…HLNEKYFAHV (243 aa). The tract at residues 259-476 is LT domain; that stretch reads KRFDYVDTRA…QSEISAAQPN (218 aa). Glu303 is an active-site residue. The tract at residues 456-476 is disordered; the sequence is EAQQQTAEKQSQSEISAAQPN.

In the N-terminal section; belongs to the bacterial solute-binding protein 3 family. This sequence in the C-terminal section; belongs to the transglycosylase Slt family.

It localises to the cell outer membrane. The catalysed reaction is Exolytic cleavage of the (1-&gt;4)-beta-glycosidic linkage between N-acetylmuramic acid (MurNAc) and N-acetylglucosamine (GlcNAc) residues in peptidoglycan, from either the reducing or the non-reducing ends of the peptidoglycan chains, with concomitant formation of a 1,6-anhydrobond in the MurNAc residue.. In terms of biological role, murein-degrading enzyme that degrades murein glycan strands and insoluble, high-molecular weight murein sacculi, with the concomitant formation of a 1,6-anhydromuramoyl product. Lytic transglycosylases (LTs) play an integral role in the metabolism of the peptidoglycan (PG) sacculus. Their lytic action creates space within the PG sacculus to allow for its expansion as well as for the insertion of various structures such as secretion systems and flagella. The chain is Membrane-bound lytic murein transglycosylase F from Shewanella loihica (strain ATCC BAA-1088 / PV-4).